A 1466-amino-acid polypeptide reads, in one-letter code: ABC transporter G family member 40 (1466 aa).

The tract at residues 1–21 (MSHRHHAALVASASGRSPSWG) is disordered. Residues 176 to 449 (GLIGQFGSSN…FEASGFRCPQ (274 aa)) form the ABC transporter 1 domain. ATP is bound at residue 209-216 (GPPSSGKS). An ABC transmembrane type-2 1 domain is found at 527 to 740 (ESLKAVLCRE…SQNAISINEF (214 aa)). 6 consecutive transmembrane segments (helical) span residues 545–565 (FLYI…MTVF), 581–601 (FLGA…SELN), 633–653 (VPVS…VMGF), 664–684 (FLAF…LGAI), 690–710 (IAIS…GFVI), and 776–796 (FWLS…LYIL). A compositionally biased stretch (basic and acidic residues) spans 821–831 (YTETRNEEHRS). Positions 821–851 (YTETRNEEHRSRTSTTTSSIPTSANGEGNRP) are disordered. The segment covering 833-843 (TSTTTSSIPTS) has biased composition (low complexity). In terms of domain architecture, ABC transporter 2 spans 865-1117 (LCFNHLNYYV…KLVEYFETIL (253 aa)). 910-917 (GVSGAGKT) contacts ATP. The ABC transmembrane type-2 2 domain occupies 1190–1404 (IQCVANLWKQ…TIYGVIASQF (215 aa)). Transmembrane regions (helical) follow at residues 1209 to 1229 (YNSL…TVFW), 1241 to 1261 (LYNL…TNCM), 1297 to 1317 (FIYN…MIGY), 1327 to 1347 (FLFF…MLVA), 1355 to 1375 (ANIL…FLIF), 1396 to 1416 (IYGV…VPGG), and 1435 to 1455 (FLGY…LIFG).

Belongs to the ABC transporter superfamily. ABCG family. PDR (TC 3.A.1.205) subfamily.

Its subcellular location is the membrane. The sequence is that of ABC transporter G family member 40 from Oryza sativa subsp. japonica (Rice).